The chain runs to 802 residues: Putative transcriptional regulator cudA (802 aa).

Disordered stretches follow at residues 1–148, 154–173, 381–446, and 636–658; these read MNQS…PSAI, ISNN…NLLL, NNIN…NNEN, and QPQQ…QQGQ. A compositionally biased stretch (low complexity) spans 25 to 63; the sequence is NNNNNGNNGMMMNQQQMQQHVVPHLHHLQQQQQQPQQQQ. Polar residues predominate over residues 69-88; it reads DYSNSPNGTTNGSTMSPNCI. Positions 89-128 are enriched in low complexity; the sequence is NTNNNNNNNNNNNNNSNNNNNNNNNASNNLTSNKSSSTNT. Residues 129–142 are compositionally biased toward polar residues; that stretch reads PQIGQLQASPANLT. The span at 381–445 shows a compositional bias: low complexity; that stretch reads NNINNNNNIN…CNNNNNNNNE (65 aa).

As to expression, expressed in the prestalk cells that constitute the slug tip (pstA cells) and in prespore cells (at protein level). Not expressed in the band of prestalk cells that lies behind the slug tip (pstO cells). Highly expressed in pstO derived papilla cells during culmination.

The protein resides in the nucleus. It is found in the nucleoplasm. Functionally, essential for normal culmination. May function as a transcriptional regulator. This is Putative transcriptional regulator cudA (cudA) from Dictyostelium discoideum (Social amoeba).